The primary structure comprises 328 residues: Putative lipase LIH1 (328 aa).

The Nucleophile role is filled by Ser181. Active-site charge relay system residues include Asp253 and His315.

The protein belongs to the AB hydrolase superfamily. Lipase family.

It carries out the reaction a triacylglycerol + H2O = a diacylglycerol + a fatty acid + H(+). Functionally, lipases catalyze the hydrolysis of the ester bond of tri-, di- and monoglycerides of long-chain fatty acids into fatty acids and glycerol. In Saccharomyces cerevisiae (strain ATCC 204508 / S288c) (Baker's yeast), this protein is Putative lipase LIH1.